An 852-amino-acid polypeptide reads, in one-letter code: Thrombospondin type-1 domain-containing protein 1 (852 aa).

Positions 1–24 (MKPMLKDFSNLLLVVLCDYVLGEA) are cleaved as a signal peptide. Topologically, residues 25–413 (EYLLLREPGH…QPQGPVKSNN (389 aa)) are extracellular. N-linked (GlcNAc...) asparagine glycans are attached at residues Asn39, Asn53, Asn58, Asn69, Asn80, Asn135, and Asn304. The 54-residue stretch at 340 to 393 (TETWGLWQPWSQCSATCGDGVRERRRVCLTSFPSSPVCPGMSLEASLCSLEECA) folds into the TSP type-1 domain. Cystine bridges form between Cys352-Cys387, Cys356-Cys392, and Cys367-Cys377. A helical membrane pass occupies residues 414–434 (IVTVTGISLCLFIIIATVLIT). At 435–852 (LWRRFGRPAK…STLSVEKLVI (418 aa)) the chain is on the cytoplasmic side. 2 disordered regions span residues 444–517 (KCST…ESFQ) and 624–799 (LIRK…RKDK). At Ser463 the chain carries Phosphoserine. Over residues 645–654 (ARNAHFRRTA) the composition is skewed to basic residues. A compositionally biased stretch (basic and acidic residues) spans 655–669 (SFHEARQARPFRERS). The span at 670 to 685 (MSTLTPRQAPAYSSRT) shows a compositional bias: polar residues. Residues 686–696 (RTCEQAEDRFR) are compositionally biased toward basic and acidic residues. Composition is skewed to polar residues over residues 766 to 778 (SHKSVSRKQSSPI) and 785 to 794 (QRVSSLSPSQ).

As to quaternary structure, part of a complex composed of THSD1, PTK2/FAK1, TLN1 and VCL. Interacts with TLN1.

The protein localises to the endosome membrane. Its subcellular location is the cell junction. The protein resides in the focal adhesion. It is found in the membrane. It localises to the secreted. In terms of biological role, is a positive regulator of nascent focal adhesion assembly, involved in the modulation of endothelial cell attachment to the extracellular matrix. The chain is Thrombospondin type-1 domain-containing protein 1 (THSD1) from Homo sapiens (Human).